A 141-amino-acid chain; its full sequence is Large ribosomal subunit protein uL11 (141 aa).

Belongs to the universal ribosomal protein uL11 family. Part of the ribosomal stalk of the 50S ribosomal subunit. Interacts with L10 and the large rRNA to form the base of the stalk. L10 forms an elongated spine to which L12 dimers bind in a sequential fashion forming a multimeric L10(L12)X complex. Post-translationally, one or more lysine residues are methylated.

In terms of biological role, forms part of the ribosomal stalk which helps the ribosome interact with GTP-bound translation factors. This chain is Large ribosomal subunit protein uL11, found in Lactobacillus acidophilus (strain ATCC 700396 / NCK56 / N2 / NCFM).